The chain runs to 67 residues: Large ribosomal subunit protein bL35 (67 aa).

The protein belongs to the bacterial ribosomal protein bL35 family.

The chain is Large ribosomal subunit protein bL35 from Allorhizobium ampelinum (strain ATCC BAA-846 / DSM 112012 / S4) (Agrobacterium vitis (strain S4)).